A 255-amino-acid polypeptide reads, in one-letter code: Sporulation-specific N-acetylmuramoyl-L-alanine amidase (255 aa).

A MurNAc-LAA domain is found at 4–172; that stretch reads IFIDPGHGGS…LARGHANGLE (169 aa). 3 residues coordinate Zn(2+): histidine 10, glutamate 24, and histidine 79. Glutamate 141 is a catalytic residue. In terms of domain architecture, SPOR spans 180-254; sequence TSSSGLYKVQ…AGFDAIVILE (75 aa). 2 repeat units span residues 184–219 and 220–255. The interval 184–255 is 2 X 35 AA approximate tandem repeats; that stretch reads GLYKVQIGAF…GFDAIVILES (72 aa).

It belongs to the N-acetylmuramoyl-L-alanine amidase 3 family. Zn(2+) is required as a cofactor.

Its subcellular location is the secreted. It localises to the cell wall. It catalyses the reaction Hydrolyzes the link between N-acetylmuramoyl residues and L-amino acid residues in certain cell-wall glycopeptides.. Its activity is regulated as follows. Inhibited by EDTA. Autolysins are involved in some important biological processes such as cell separation, cell-wall turnover, competence for genetic transformation, formation of the flagella - in particular of its basal body - and sporulation. CwlC is able to hydrolyze type A cell walls such as B.subtilis. Its main function is to lyze the mother cell wall peptidoglycan, playing a role during sporulation. This is Sporulation-specific N-acetylmuramoyl-L-alanine amidase (cwlC) from Bacillus subtilis (strain 168).